The sequence spans 320 residues: Olfactory receptor 7C1 (320 aa).

Over 1 to 25 the chain is Extracellular; it reads METGNQTHAQEFLLLGFSATSEIQF. Residue Asn5 is glycosylated (N-linked (GlcNAc...) asparagine). The helical transmembrane segment at 26–46 threads the bilayer; it reads ILFGLFLSMYLVTFTGNLLII. The Cytoplasmic portion of the chain corresponds to 47-54; it reads LAICSDSH. Residues 55–75 traverse the membrane as a helical segment; sequence LHTPMYFFLSNLSFADLCFTS. At 76 to 99 the chain is on the extracellular side; it reads TTVPKMLLNILTQNKFITYAGCLS. Cys97 and Cys189 are joined by a disulfide. The chain crosses the membrane as a helical span at residues 100-120; that stretch reads QIFFFTSFGCLDNLLLTVMAY. The Cytoplasmic segment spans residues 121 to 139; the sequence is DRFVAVCHPLHYTVIMNPQ. The helical transmembrane segment at 140–160 threads the bilayer; it reads LCGLLVLGSWCISVMGSLLET. Residues 161-197 are Extracellular-facing; the sequence is LTVLRLSFCTEMEIPHFFCDLLEVLKLACSDTFINNV. The helical transmembrane segment at 198 to 217 threads the bilayer; it reads VIYFATGVLGVISFTGIFFS. The Cytoplasmic portion of the chain corresponds to 218–237; sequence YYKIVFSILRISSAGRKHKA. The helical transmembrane segment at 238 to 258 threads the bilayer; sequence FSTCGSHLSVVTLFYGTGFGV. The Extracellular portion of the chain corresponds to 259 to 271; it reads YLSSAATPSSRTS. The chain crosses the membrane as a helical span at residues 272–292; it reads LVASVMYTMVTPMLNPFIYSL. Over 293-313 the chain is Cytoplasmic; it reads RNTDMKRALGRLLSRATFFNG.

This sequence belongs to the G-protein coupled receptor 1 family.

It is found in the cell membrane. Its function is as follows. Odorant receptor. The protein is Olfactory receptor 7C1 (OR7C1) of Homo sapiens (Human).